The following is a 411-amino-acid chain: [Pyruvate dehydrogenase (acetyl-transferring)] kinase isozyme 4, mitochondrial (411 aa).

Residues 138–368 (IIEYKDACTV…DAIIYLKALS (231 aa)) enclose the Histidine kinase domain. ATP is bound by residues 254-261 (ELFKNAMR), D293, 312-313 (ST), and 329-334 (GFGYGL).

It belongs to the PDK/BCKDK protein kinase family. As to quaternary structure, homodimer. Interacts with the pyruvate dehydrogenase complex subunit DLAT, and is part of the multimeric pyruvate dehydrogenase complex that contains multiple copies of pyruvate dehydrogenase (E1), dihydrolipoamide acetyltransferase (DLAT, E2) and lipoamide dehydrogenase (DLD, E3). As to expression, ubiquitous; highest levels of expression in heart and skeletal muscle.

It localises to the mitochondrion matrix. It catalyses the reaction L-seryl-[pyruvate dehydrogenase E1 alpha subunit] + ATP = O-phospho-L-seryl-[pyruvate dehydrogenase E1 alpha subunit] + ADP + H(+). In terms of biological role, kinase that plays a key role in regulation of glucose and fatty acid metabolism and homeostasis via phosphorylation of the pyruvate dehydrogenase subunits PDHA1 and PDHA2. This inhibits pyruvate dehydrogenase activity, and thereby regulates metabolite flux through the tricarboxylic acid cycle, down-regulates aerobic respiration and inhibits the formation of acetyl-coenzyme A from pyruvate. Inhibition of pyruvate dehydrogenase decreases glucose utilization and increases fat metabolism in response to prolonged fasting and starvation. Plays an important role in maintaining normal blood glucose levels under starvation, and is involved in the insulin signaling cascade. Via its regulation of pyruvate dehydrogenase activity, plays an important role in maintaining normal blood pH and in preventing the accumulation of ketone bodies under starvation. In the fed state, mediates cellular responses to glucose levels and to a high-fat diet. Regulates both fatty acid oxidation and de novo fatty acid biosynthesis. Plays a role in the generation of reactive oxygen species. Protects detached epithelial cells against anoikis. Plays a role in cell proliferation via its role in regulating carbohydrate and fatty acid metabolism. This is [Pyruvate dehydrogenase (acetyl-transferring)] kinase isozyme 4, mitochondrial (PDK4) from Homo sapiens (Human).